We begin with the raw amino-acid sequence, 185 residues long: Ribosome-recycling factor (185 aa).

This sequence belongs to the RRF family.

The protein resides in the cytoplasm. Functionally, responsible for the release of ribosomes from messenger RNA at the termination of protein biosynthesis. May increase the efficiency of translation by recycling ribosomes from one round of translation to another. This chain is Ribosome-recycling factor, found in Pelobacter propionicus (strain DSM 2379 / NBRC 103807 / OttBd1).